Consider the following 304-residue polypeptide: Putative S-adenosyl-L-methionine-dependent methyltransferase MMAR_1057 (304 aa).

S-adenosyl-L-methionine contacts are provided by residues Asp-130 and 159–160 (DL).

The protein belongs to the UPF0677 family.

Exhibits S-adenosyl-L-methionine-dependent methyltransferase activity. This Mycobacterium marinum (strain ATCC BAA-535 / M) protein is Putative S-adenosyl-L-methionine-dependent methyltransferase MMAR_1057.